Consider the following 588-residue polypeptide: Lamin-B1 (588 aa).

Over residues 1 to 12 (MATATPVQQQRA) the composition is skewed to polar residues. Positions 1–34 (MATATPVQQQRAGSRASAPATPLSPTRLSRLQEK) are disordered. Ala2 is subject to N-acetylalanine. The interval 2-35 (ATATPVQQQRAGSRASAPATPLSPTRLSRLQEKE) is head. Phosphothreonine occurs at positions 3 and 5. Omega-N-methylarginine is present on Arg15. A Phosphoserine modification is found at Ser17. Thr21 carries the post-translational modification Phosphothreonine. Ser24 is modified (phosphoserine). Thr26 carries the phosphothreonine modification. A Phosphoserine modification is found at Ser29. Positions 33–389 (EKEELRELND…KLLEGEEERL (357 aa)) constitute an IF rod domain. The tract at residues 36 to 70 (ELRELNDRLAVYIDKVRSLETENSALQLQVTEREE) is coil 1A. A linker 1 region spans residues 71 to 82 (VRGRELTGLKAL). The interval 83-216 (YETELADARR…EFRKNMYEEE (134 aa)) is coil 1B. A Glycyl lysine isopeptide (Lys-Gly) (interchain with G-Cter in SUMO2) cross-link involves residue Lys103. The residue at position 112 (Lys112) is an N6-acetyllysine. Residue Lys124 forms a Glycyl lysine isopeptide (Lys-Gly) (interchain with G-Cter in SUMO2) linkage. Residue Ser127 is modified to Phosphoserine. Lys146 is covalently cross-linked (Glycyl lysine isopeptide (Lys-Gly) (interchain with G-Cter in SUMO2)). At Lys158 the chain carries N6-acetyllysine; alternate. Residue Lys158 forms a Glycyl lysine isopeptide (Lys-Gly) (interchain with G-Cter in SUMO2); alternate linkage. Ser159 is subject to Phosphoserine. A Glycyl lysine isopeptide (Lys-Gly) (interchain with G-Cter in SUMO2) cross-link involves residue Lys182. Residues Ser201 and Ser233 each carry the phosphoserine modification. The segment at 217 to 244 (INETRRKHETRLVEVDSGRQIEYEYKLA) is linker 2. Glycyl lysine isopeptide (Lys-Gly) (interchain with G-Cter in SUMO2) cross-links involve residues Lys242 and Lys262. The segment at 245 to 387 (QALHEMREQH…YRKLLEGEEE (143 aa)) is coil 2. Lys272 carries the N6-acetyllysine; alternate modification. A Glycyl lysine isopeptide (Lys-Gly) (interchain with G-Cter in SUMO2); alternate cross-link involves residue Lys272. Phosphoserine occurs at positions 279 and 303. Lys313 participates in a covalent cross-link: Glycyl lysine isopeptide (Lys-Gly) (interchain with G-Cter in SUMO2). Lys331 bears the N6-acetyllysine; alternate mark. A Glycyl lysine isopeptide (Lys-Gly) (interchain with G-Cter in SUMO2); alternate cross-link involves residue Lys331. Phosphoserine is present on residues Ser376 and Ser394. A tail region spans residues 388-588 (RLKLSPSPSS…RASNKSCAIM (201 aa)). Over residues 391 to 410 (LSPSPSSRVTVSRASSSRSV) the composition is skewed to low complexity. The segment at 391 to 433 (LSPSPSSRVTVSRASSSRSVRTTRGKRKRVDVEESEASSSVSI) is disordered. O-linked (GlcNAc) threonine glycosylation is present at Thr400. An Omega-N-methylarginine modification is found at Arg414. Residues 416-421 (KRKRVD) carry the Nuclear localization signal motif. The 117-residue stretch at 431 to 547 (VSISHSASAT…EEVAQRSTVF (117 aa)) folds into the LTD domain. Position 484 is an N6-acetyllysine (Lys484). Residue Lys533 forms a Glycyl lysine isopeptide (Lys-Gly) (interchain with G-Cter in SUMO2) linkage. Residue Ser535 is modified to Phosphoserine. Lys548 participates in a covalent cross-link: Glycyl lysine isopeptide (Lys-Gly) (interchain with G-Cter in SUMO2). Residue Cys585 is modified to Cysteine methyl ester. Cys585 carries S-farnesyl cysteine lipidation. Residues 586-588 (AIM) constitute a propeptide, removed in mature form.

Belongs to the intermediate filament family. Homodimer. Lamin dimers then assemble into dimeric head-to-tail polymers. Ultimately, two head-to-tail polymers assemble laterally into a protofilament with a uniformly shaped rod of 3.5 nm in diameter. Interacts with SPAG4 and SEPT12. In terms of processing, B-type lamins undergo a series of modifications, such as farnesylation and phosphorylation. Increased phosphorylation of the lamins occurs before envelope disintegration and probably plays a role in regulating lamin associations. Phosphorylation plays a key role in lamin organization, subcellular localization and nuclear envelope disintegration. Phosphorylation by CDK1 at Ser-24 and Ser-394 at the onset of mitosis drives lamin disassembly and nuclear envelope breakdown.

The protein localises to the nucleus lamina. Functionally, lamins are intermediate filament proteins that assemble into a filamentous meshwork, and which constitute the major components of the nuclear lamina, a fibrous layer on the nucleoplasmic side of the inner nuclear membrane. Lamins provide a framework for the nuclear envelope, bridging the nuclear envelope and chromatin, thereby playing an important role in nuclear assembly, chromatin organization, nuclear membrane and telomere dynamics. The structural integrity of the lamina is strictly controlled by the cell cycle, as seen by the disintegration and formation of the nuclear envelope in prophase and telophase, respectively. This chain is Lamin-B1 (Lmnb1), found in Mus musculus (Mouse).